Reading from the N-terminus, the 306-residue chain is Hydroxypyruvate reductase (306 aa).

Residues 152–153 (NI), Asp-172, 228–230 (TAR), and Asp-254 contribute to the NAD(+) site. Residue Arg-230 is part of the active site. Residue Glu-259 is part of the active site. The active-site Proton donor is the His-280. 280 to 283 (HIGA) serves as a coordination point for NAD(+).

This sequence belongs to the D-isomer specific 2-hydroxyacid dehydrogenase family.

The catalysed reaction is (R)-glycerate + NAD(+) = 3-hydroxypyruvate + NADH + H(+). The enzyme catalyses (R)-glycerate + NADP(+) = 3-hydroxypyruvate + NADPH + H(+). Functionally, involved in the degradation of L-serine via 3-hydroxypyruvate. Catalyzes the non-reversible reduction of 3-hydroxypyruvate to yield D-glycerate. This chain is Hydroxypyruvate reductase, found in Thermotoga maritima (strain ATCC 43589 / DSM 3109 / JCM 10099 / NBRC 100826 / MSB8).